Reading from the N-terminus, the 307-residue chain is Methionyl-tRNA formyltransferase (307 aa).

108 to 111 (SLLP) lines the (6S)-5,6,7,8-tetrahydrofolate pocket.

The protein belongs to the Fmt family.

The catalysed reaction is L-methionyl-tRNA(fMet) + (6R)-10-formyltetrahydrofolate = N-formyl-L-methionyl-tRNA(fMet) + (6S)-5,6,7,8-tetrahydrofolate + H(+). Functionally, attaches a formyl group to the free amino group of methionyl-tRNA(fMet). The formyl group appears to play a dual role in the initiator identity of N-formylmethionyl-tRNA by promoting its recognition by IF2 and preventing the misappropriation of this tRNA by the elongation apparatus. This chain is Methionyl-tRNA formyltransferase, found in Xylella fastidiosa (strain 9a5c).